The chain runs to 390 residues: tRNA (guanine(9)-N1)-methyltransferase (390 aa).

Residues 1–72 (MDIDEESYLN…RTAQLAEGYA (72 aa)) form a disordered region. Residues 43 to 59 (ARLEEIKPLKRAAERER) are compositionally biased toward basic and acidic residues. In terms of domain architecture, SAM-dependent MTase TRM10-type spans 92-340 (KERKEAQRRI…AVIPIRKYAP (249 aa)). S-adenosyl-L-methionine contacts are provided by residues 246-247 (LS), G266, 270-274 (DRNRH), C278, L292, and 305-307 (KVL). D270 (proton acceptor) is an active-site residue. The interval 343–390 (KTKRAKTETKRNEKEEEEVECTSAEGEEDIGVIEESAEVDPEDVFSNQ) is disordered. Residues 347 to 356 (AKTETKRNEK) are compositionally biased toward basic and acidic residues. Residues 357–390 (EEEEVECTSAEGEEDIGVIEESAEVDPEDVFSNQ) are compositionally biased toward acidic residues.

This sequence belongs to the class IV-like SAM-binding methyltransferase superfamily. TRM10 family. As to quaternary structure, monomer.

It localises to the cytoplasm. Its subcellular location is the nucleus. The enzyme catalyses guanosine(9) in tRNA + S-adenosyl-L-methionine = N(1)-methylguanosine(9) in tRNA + S-adenosyl-L-homocysteine + H(+). Its function is as follows. S-adenosyl-L-methionine-dependent guanine N(1)-methyltransferase that catalyzes the formation of N(1)-methylguanine at position 9 (m1G9) in cytoplasmic tRNA. The polypeptide is tRNA (guanine(9)-N1)-methyltransferase (Cryptococcus neoformans var. neoformans serotype D (strain JEC21 / ATCC MYA-565) (Filobasidiella neoformans)).